Consider the following 1070-residue polypeptide: MSGFGDVPDQYDPAGVEERVFSYWEAVDAYEQTVDHRADAETFFFVDGPPYTSGAAHMGTTWNKTLKDAYIRYHRMQGYDVTDRPGYDMHGLPIETKVEEQLGFESKKDIQEFGEEAFIEECKRFADDNLDGLQSDFQSFGVWMDWDNPYKTVDPSYMEAAWWAFSEVHDNGLVERGQRSISQCPRCETAIANNEVEYEDVTDPSIYVRFDLDDREGSLVVWTTTPWTIPANQFVAVDEDGDYQQVRATTPDGETDVLYVASECVEDVLSAGGYSDHEIVADHSGSDLIGWSYTPPLADAVPANPTDADGTHEVYHGDWVEADRTGLVHSAPGHGEEDFERGAELDLPVFCPVGEDGVYTDAGGKYAGAFVRDANDDIIADLEARDAMLASQTVEHSYGHCWRCDTGIIQIVTDQWFITITDVKDELLANMDTSEWHPEWARDNRFRDFVENAPDWNVSRQRYWGIPVPIWTPEDWSGDAEDVLVVGTREELAALADQDVDPASVDLHKPTVDDITITEDGTEYTRVPDVFDVWLDSSVASWGTLNYPEQEDDFDELWPADLIMEAHDQTRGWFWSQLGMGTAALGDVPYEEVLMHGYANMPDGRGMSKSKGITIEPNEVIDEYGADPMRMFLLSVTPQGDDMSFSWDETENMQRDLNILWNVFRFPRPYMALDDFDANVPAAFGGDDAGVGIADADLETVDEWLLSRLQHVKADATAHWEDFEQHRALDAVLEFVVEDLSRYYVQVVRERMWEDDASASKTAAYATMQRVLLEVVALLAPYAPFVTEELYSHLTGDRGYDTVHMADWPTVEESLRAPALEADVAVLRAAEEAGSHARQQAGRKLRWPVTRVVVDAAEDSVVDALDAHGDLLADRLNTRAIEVVEPGAAWDELAYSARADMSELGPAFGDDAGAVMNALNDARVTDRDIDALAEQVAADLGRDDIELTTEMVEFVEETPEHVAGAAFETETAAGTVYVDTELNEDVESEGYAREVVRRVQEMRKEMDLAMDAEIRLDVLVFDERVGELVARHEPLITAETRARELGEVEDGHREEWDVEGTTMILEVEAV.

A 'HIGH' region motif is present at residues P50–T60. The 'KMSKS' region motif lies at G606–S610. K609 lines the ATP pocket.

This sequence belongs to the class-I aminoacyl-tRNA synthetase family. IleS type 2 subfamily. In terms of assembly, monomer. Zn(2+) serves as cofactor.

The protein resides in the cytoplasm. The enzyme catalyses tRNA(Ile) + L-isoleucine + ATP = L-isoleucyl-tRNA(Ile) + AMP + diphosphate. Catalyzes the attachment of isoleucine to tRNA(Ile). As IleRS can inadvertently accommodate and process structurally similar amino acids such as valine, to avoid such errors it has two additional distinct tRNA(Ile)-dependent editing activities. One activity is designated as 'pretransfer' editing and involves the hydrolysis of activated Val-AMP. The other activity is designated 'posttransfer' editing and involves deacylation of mischarged Val-tRNA(Ile). The protein is Isoleucine--tRNA ligase of Halobacterium salinarum (strain ATCC 700922 / JCM 11081 / NRC-1) (Halobacterium halobium).